A 315-amino-acid polypeptide reads, in one-letter code: MENTQHSLPIDHVIDIGDNRYIRVWETKPKNKETKRNNTIVIASGFARRMDHFAGLAEYLANNGFRVIRYDSLNHVGLSSGEIKQFSMSVGKHSLLTVIDWLKERNINNIGLIASSLSARIAYEVAAEIDLSFLITAVGVVNLRSTLEKALKYDYLQMEVNTIPEDLIFEGHNLGSKVFVTDCFENNWDSLDSTINKICELDIPFIAFTSDGDDWVCQHEVKHLVSNVKSDKKKIYSLVGSSHDLGENLVVLRNFYQSMTKAAVSLDRQLVELVDEIIEPNFEDLTVITVNERRLKNKIENEIINRLADRVLASV.

Catalysis depends on charge relay system residues Ser116, Asp213, and His243.

This sequence belongs to the LuxD family.

It participates in lipid metabolism; fatty acid reduction for biolumincescence. Functionally, acyl transferase is part of the fatty acid reductase system required for aldehyde biosynthesis; it produces fatty acids for the luminescent reaction. In Photobacterium leiognathi, this protein is Acyl transferase.